The primary structure comprises 874 residues: MQCPNQNHMLVNRAMVVAALDSFEDARRIISGVLDLSRLTNTSVKGQHTNDTNYFSRYSNFFSQMPAIILNQLKCCIKAQVDDAVKMVLQKAKKVEVSKPVEKMLTFTTLNTYLGYPESTGCVMEYTEEQSGPIAAKLLITLLSSTLNAMVRPKSDPNISQNKIPRHYYQLKVHVGAQKKVNLTAIEVIRGCQHECSVVYCEFVRYSAYFAGLYDDQVAAILLYAVAAHNVQGFGARFCVLWALMCVRIAGFADDINIYIKHRGMSGLLPQLVEMKCLLGRGVNEIDVETEARRRLDVGSLSMQRLDENELRAAVRLIYSEELRRPVTYPLICDFWSSRWLWAANGSHSRALEHAHPELATRKEGQAYRKAVMEQWQHNPMDRWDGTVYVTPSAKLEHGKTRLLLACDTLSYMWFEYALRPVERIWENSNVILDPGSMGNCGIATRINGWRNGMPGQSFFAVDYDDFNSQHTLMSQKIVFEELFHHIGYNASWVKTLVDSFDSMELWIKGKCAGIMAGTLMSGHRATSFINSVLNRAYIICAGGHVPTSMHVGDDILMSCTLGHADNLIANLNRKGVRLNASKQVFSKTSGEFLRVAHREHTSHGYLARVISSAVSGNWVSDHTLNQQEALMNAIVCCRGILNRSLPGEKNPVVRVISRSVSKRTKIEEKTIRLLLSGRACLKGGVVYGEQTNYIQVYRINCRVERSEEKLPPYRHATEDYLNNHLADIEVMAVRQYGSDIADIMAQASWKKSMSTEGAEDVSRLSLQRDKTLPCLHCITEKETSLLPVRYGLFSSYPILMMLKDRIPIKEALKLAVTIGYRPQPNSDLELDLWGESNNSCAIEGVLPYNEATSLAQKLPCGGVVIQVIHNVYV.

This sequence belongs to the totiviridae RNA-directed RNA polymerase family.

The enzyme catalyses RNA(n) + a ribonucleoside 5'-triphosphate = RNA(n+1) + diphosphate. In terms of biological role, RNA-dependent RNA polymerase which replicates the viral genome. Catalyzes the transcription of fully conservative plus-strand genomic RNAs that are extruded from the virion into the cytoplasm where they function as mRNAs for translation of viral proteins and also as substrates for encapsidation to form new virions. Once encapsidated, the positive strand is converted to dsRNA by the RNA-directed RNA polymerase. Displays ssRNA-binding activity. The protein is Probable RNA-directed RNA polymerase (ORF3) of Leishmania major (LRV-1-1).